Reading from the N-terminus, the 120-residue chain is Small ribosomal subunit protein uS13 (120 aa).

Residues 96 to 120 (PCRGQRTRTNARTRKGPRKAIAGKK) are disordered.

It belongs to the universal ribosomal protein uS13 family. As to quaternary structure, part of the 30S ribosomal subunit. Forms a loose heterodimer with protein S19. Forms two bridges to the 50S subunit in the 70S ribosome.

In terms of biological role, located at the top of the head of the 30S subunit, it contacts several helices of the 16S rRNA. In the 70S ribosome it contacts the 23S rRNA (bridge B1a) and protein L5 of the 50S subunit (bridge B1b), connecting the 2 subunits; these bridges are implicated in subunit movement. Contacts the tRNAs in the A and P-sites. This chain is Small ribosomal subunit protein uS13, found in Dechloromonas aromatica (strain RCB).